Reading from the N-terminus, the 949-residue chain is Protocadherin alpha-11 (949 aa).

Residues 1-29 (MFGFQRRGLGTPRLQLWLLLLEFWEVGSG) form the signal peptide. Cadherin domains follow at residues 30–133 (QLHY…PPVF), 157–242 (ASDA…DPEF), 243–349 (DKSE…SPEV), 350–454 (AVTS…APAF), 455–564 (AQPE…APAL), and 580–677 (VPRS…APKA). At 30 to 696 (QLHYSVSEEA…SPEAALVDVN (667 aa)) the chain is on the extracellular side. N-linked (GlcNAc...) asparagine glycans are attached at residues Asn-265 and Asn-304. Asn-547 is a glycosylation site (N-linked (GlcNAc...) asparagine). A helical membrane pass occupies residues 697 to 717 (VYLIIAICVVSSLLVLTLLLY). Residues 718–949 (TALWWSATPT…GNSTTDNSDQ (232 aa)) are Cytoplasmic-facing. PXXP repeat units follow at residues 733-736 (PGKP) and 773-776 (PSLP). The interval 733–893 (PGKPTLVCSR…PDKFIIPGSP (161 aa)) is 6 X 4 AA repeats of P-X-X-P. Disordered stretches follow at residues 753–807 (RRQR…DWRY) and 826–949 (ILRA…NSDQ). The segment covering 780 to 789 (NKEEEGERQE) has biased composition (basic and acidic residues). PXXP repeat units follow at residues 795–798 (PGQP), 831–834 (PGGP), 872–875 (PGNP), and 890–893 (PGSP). The segment covering 908-922 (DKSDFITFGKKEETK) has biased composition (basic and acidic residues).

The protein localises to the cell membrane. Potential calcium-dependent cell-adhesion protein. May be involved in the establishment and maintenance of specific neuronal connections in the brain. This Homo sapiens (Human) protein is Protocadherin alpha-11 (PCDHA11).